The sequence spans 197 residues: Ribose 1,5-bisphosphate phosphokinase PhnN (197 aa).

21–28 (GPSGAGKD) serves as a coordination point for ATP.

It belongs to the ribose 1,5-bisphosphokinase family.

It catalyses the reaction alpha-D-ribose 1,5-bisphosphate + ATP = 5-phospho-alpha-D-ribose 1-diphosphate + ADP. It participates in metabolic intermediate biosynthesis; 5-phospho-alpha-D-ribose 1-diphosphate biosynthesis; 5-phospho-alpha-D-ribose 1-diphosphate from D-ribose 5-phosphate (route II): step 3/3. In terms of biological role, catalyzes the phosphorylation of ribose 1,5-bisphosphate to 5-phospho-D-ribosyl alpha-1-diphosphate (PRPP). The polypeptide is Ribose 1,5-bisphosphate phosphokinase PhnN (Rhizobium etli (strain CIAT 652)).